The primary structure comprises 602 residues: Aspartate--tRNA(Asp/Asn) ligase (602 aa).

Glu-170 contacts L-aspartate. The tract at residues 194 to 197 (QLFK) is aspartate. Residue Arg-216 coordinates L-aspartate. ATP contacts are provided by residues 216-218 (RDE) and Gln-225. His-448 is an L-aspartate binding site. Glu-482 contacts ATP. Arg-489 is a binding site for L-aspartate. 534–537 (GWDR) serves as a coordination point for ATP. The disordered stretch occupies residues 559 to 602 (GGVDPLTSAPAPITAQQRKESGVDAKPEPKGDAAAAKPQVSAEK). Over residues 575–589 (QRKESGVDAKPEPKG) the composition is skewed to basic and acidic residues.

Belongs to the class-II aminoacyl-tRNA synthetase family. Type 1 subfamily. In terms of assembly, homodimer.

It localises to the cytoplasm. The enzyme catalyses tRNA(Asx) + L-aspartate + ATP = L-aspartyl-tRNA(Asx) + AMP + diphosphate. Aspartyl-tRNA synthetase with relaxed tRNA specificity since it is able to aspartylate not only its cognate tRNA(Asp) but also tRNA(Asn). Reaction proceeds in two steps: L-aspartate is first activated by ATP to form Asp-AMP and then transferred to the acceptor end of tRNA(Asp/Asn). The chain is Aspartate--tRNA(Asp/Asn) ligase from Rhodococcus opacus (strain B4).